Reading from the N-terminus, the 553-residue chain is CTP synthase (553 aa).

Residues 1-270 (MTKYVFVTGG…DRLICEELRL (270 aa)) form an amidoligase domain region. Ser-13 is a CTP binding site. Ser-13 contacts UTP. ATP is bound by residues 14 to 19 (SLGKGI) and Asp-71. Residues Asp-71 and Glu-144 each contribute to the Mg(2+) site. Residues 151 to 153 (DIE), 191 to 196 (KTKPTQ), and Lys-227 contribute to the CTP site. UTP is bound by residues 191-196 (KTKPTQ) and Lys-227. Residues 295-547 (TIGMVGKYVD…VQAALACQQT (253 aa)) enclose the Glutamine amidotransferase type-1 domain. Position 356 (Gly-356) interacts with L-glutamine. Cys-383 (nucleophile; for glutamine hydrolysis) is an active-site residue. Residues 384-387 (LGMQ), Glu-407, and Arg-473 contribute to the L-glutamine site. Residues His-520 and Glu-522 contribute to the active site.

It belongs to the CTP synthase family. Homotetramer.

It carries out the reaction UTP + L-glutamine + ATP + H2O = CTP + L-glutamate + ADP + phosphate + 2 H(+). The enzyme catalyses L-glutamine + H2O = L-glutamate + NH4(+). The catalysed reaction is UTP + NH4(+) + ATP = CTP + ADP + phosphate + 2 H(+). It functions in the pathway pyrimidine metabolism; CTP biosynthesis via de novo pathway; CTP from UDP: step 2/2. Its activity is regulated as follows. Allosterically activated by GTP, when glutamine is the substrate; GTP has no effect on the reaction when ammonia is the substrate. The allosteric effector GTP functions by stabilizing the protein conformation that binds the tetrahedral intermediate(s) formed during glutamine hydrolysis. Inhibited by the product CTP, via allosteric rather than competitive inhibition. Catalyzes the ATP-dependent amination of UTP to CTP with either L-glutamine or ammonia as the source of nitrogen. Regulates intracellular CTP levels through interactions with the four ribonucleotide triphosphates. In Burkholderia mallei (strain NCTC 10229), this protein is CTP synthase.